The sequence spans 209 residues: Large ribosomal subunit protein uL3 (209 aa).

The tract at residues 128-163 (FGGGSRTHGQSDRLRAPGSVGGSSDPSRTFRGTRMA) is disordered.

This sequence belongs to the universal ribosomal protein uL3 family. Part of the 50S ribosomal subunit. Forms a cluster with proteins L14 and L19.

Its function is as follows. One of the primary rRNA binding proteins, it binds directly near the 3'-end of the 23S rRNA, where it nucleates assembly of the 50S subunit. The protein is Large ribosomal subunit protein uL3 of Chlorobium phaeobacteroides (strain DSM 266 / SMG 266 / 2430).